The sequence spans 103 residues: MANLSPDEAIELAYDIFLEMASDNLEPADILLFNLQFEERGAVEMVETSENWEQEIGVLIDPDAFAEVWIGLINQNDEMDDIFARFLISNDAENREYHVIWKS.

The protein belongs to the putative dsDNA mimic protein family.

Functionally, may act as a double-stranded DNA (dsDNA) mimic. Probably regulates the activity of a dsDNA-binding protein. This Glaesserella parasuis serovar 5 (strain SH0165) (Haemophilus parasuis) protein is Putative double-stranded DNA mimic protein HAPS_1002.